Reading from the N-terminus, the 362-residue chain is MSRPQVTVHSLTGEATANALPLPAVFSAPIRPDIVHTVFTSVNKNKRQAYAVSEKAGHQTSAESWGTGRAVARIPRVGGGGTGRSGQGAFGNMCRGGRMFAPTKTWRKWNVKVNHNEKRYATASAIAATAVASLVLARGHRVEKIPEIPLVVSTDLESIQKTKEAVAALKAVGAHSDLLKVLKSKKLRAGKGKYRNRRWTQRRGPLVVYAEDNGIVKALRNVPGVETANVASLNLLQLAPGAHLGRFVIWTEAAFTKLDQVWGSETVASSKVGYTLPSHIISTSDVTRIINSSEIQSAIRPAGQATQKRTHVLKKNPLKNKQVLLRLNPYAKVFAAEKLGSKKAEKTGTKPAAVFTETLKHD.

N-acetylserine is present on serine 2. Arginine 95 bears the Omega-N-methylarginine mark. The segment at 277 to 362 (PSHIISTSDV…AVFTETLKHD (86 aa)) is C-terminal-extended nuclear localization signal.

The protein belongs to the universal ribosomal protein uL4 family. As to quaternary structure, component of the large ribosomal subunit (LSU). Mature yeast ribosomes consist of a small (40S) and a large (60S) subunit. The 40S small subunit contains 1 molecule of ribosomal RNA (18S rRNA) and 33 different proteins (encoded by 57 genes). The large 60S subunit contains 3 rRNA molecules (25S, 5.8S and 5S rRNA) and 46 different proteins (encoded by 81 genes). uL4 is associated with the polypeptide exit tunnel. uL4 interacts with its chaperone ACL4 and the nuclear import receptor KAP104. In terms of processing, N-terminally acetylated by acetyltransferase NatA.

Its subcellular location is the cytoplasm. The protein resides in the nucleus. Its function is as follows. Component of the ribosome, a large ribonucleoprotein complex responsible for the synthesis of proteins in the cell. The small ribosomal subunit (SSU) binds messenger RNAs (mRNAs) and translates the encoded message by selecting cognate aminoacyl-transfer RNA (tRNA) molecules. The large subunit (LSU) contains the ribosomal catalytic site termed the peptidyl transferase center (PTC), which catalyzes the formation of peptide bonds, thereby polymerizing the amino acids delivered by tRNAs into a polypeptide chain. The nascent polypeptides leave the ribosome through a tunnel in the LSU and interact with protein factors that function in enzymatic processing, targeting, and the membrane insertion of nascent chains at the exit of the ribosomal tunnel. uL4 participates in the regulation of the accumulation of its own mRNA. The sequence is that of Large ribosomal subunit protein uL4A from Saccharomyces cerevisiae (strain ATCC 204508 / S288c) (Baker's yeast).